A 245-amino-acid polypeptide reads, in one-letter code: Ribonuclease PH (245 aa).

Residues Arg-86 and 124–126 contribute to the phosphate site; that span reads GTR.

This sequence belongs to the RNase PH family. Homohexameric ring arranged as a trimer of dimers.

The enzyme catalyses tRNA(n+1) + phosphate = tRNA(n) + a ribonucleoside 5'-diphosphate. Functionally, phosphorolytic 3'-5' exoribonuclease that plays an important role in tRNA 3'-end maturation. Removes nucleotide residues following the 3'-CCA terminus of tRNAs; can also add nucleotides to the ends of RNA molecules by using nucleoside diphosphates as substrates, but this may not be physiologically important. Probably plays a role in initiation of 16S rRNA degradation (leading to ribosome degradation) during starvation. The chain is Ribonuclease PH from Bacillus anthracis (strain A0248).